Consider the following 87-residue polypeptide: Small ribosomal subunit protein bS20 (87 aa).

A disordered region spans residues 1-25 (MANIKSAKKRAVQSEKHRLHNASRR).

It belongs to the bacterial ribosomal protein bS20 family.

Functionally, binds directly to 16S ribosomal RNA. The polypeptide is Small ribosomal subunit protein bS20 (Baumannia cicadellinicola subsp. Homalodisca coagulata).